A 558-amino-acid polypeptide reads, in one-letter code: Thermosome subunit alpha (558 aa).

Residues 536 to 558 form a disordered region; that stretch reads TEKGKKEGGEGAGAETPGAPSLE. Low complexity predominate over residues 548–558; that stretch reads GAETPGAPSLE.

The protein belongs to the TCP-1 chaperonin family. In terms of assembly, forms a Heterooligomeric complex of two stacked eight-membered rings.

Molecular chaperone; binds unfolded polypeptides in vitro, and has a weak ATPase activity. In Sulfolobus acidocaldarius (strain ATCC 33909 / DSM 639 / JCM 8929 / NBRC 15157 / NCIMB 11770), this protein is Thermosome subunit alpha (thsA).